The following is a 292-amino-acid chain: Large ribosomal subunit protein bL19m (292 aa).

Positions 40-61 (PVRQQSTGPSEPGAFQPPPKPV) are disordered. Ser77 carries the post-translational modification Phosphoserine.

Belongs to the bacterial ribosomal protein bL19 family. Component of the mitochondrial ribosome large subunit (39S) which comprises a 16S rRNA and about 50 distinct proteins.

The protein resides in the mitochondrion. The polypeptide is Large ribosomal subunit protein bL19m (MRPL19) (Pongo abelii (Sumatran orangutan)).